Consider the following 348-residue polypeptide: Dihydroorotase (348 aa).

Zn(2+) contacts are provided by His-13 and His-15. Substrate is bound by residues 15–17 (HLR) and Asn-41. Residues Lys-99, His-136, and His-174 each coordinate Zn(2+). Residue Lys-99 is modified to N6-carboxylysine. His-136 lines the substrate pocket. Leu-219 is a binding site for substrate. A Zn(2+)-binding site is contributed by Asp-247. Asp-247 is a catalytic residue. 2 residues coordinate substrate: His-251 and Ala-263.

The protein belongs to the metallo-dependent hydrolases superfamily. DHOase family. Class II DHOase subfamily. As to quaternary structure, homodimer. Requires Zn(2+) as cofactor.

The enzyme catalyses (S)-dihydroorotate + H2O = N-carbamoyl-L-aspartate + H(+). It functions in the pathway pyrimidine metabolism; UMP biosynthesis via de novo pathway; (S)-dihydroorotate from bicarbonate: step 3/3. In terms of biological role, catalyzes the reversible cyclization of carbamoyl aspartate to dihydroorotate. This is Dihydroorotase from Rhizobium johnstonii (strain DSM 114642 / LMG 32736 / 3841) (Rhizobium leguminosarum bv. viciae).